The sequence spans 308 residues: Cytochrome b (308 aa).

Helical transmembrane passes span 1 to 21, 45 to 66, 81 to 101, and 146 to 166; these read FGSL…LMAM, WLIR…YLHI, WNTG…GYVL, and FFAL…IHLT. Heme b-binding residues include His-51 and His-65. Residues His-150 and His-164 each contribute to the heme b site. An a ubiquinone-binding site is contributed by His-169. 3 consecutive transmembrane segments (helical) span residues 194-214, 256-276, and 288-308; these read TKDI…AMFS, LGGV…PFLH, and LSQL…WVGS.

It belongs to the cytochrome b family. As to quaternary structure, the cytochrome bc1 complex contains 11 subunits: 3 respiratory subunits (MT-CYB, CYC1 and UQCRFS1), 2 core proteins (UQCRC1 and UQCRC2) and 6 low-molecular weight proteins (UQCRH/QCR6, UQCRB/QCR7, UQCRQ/QCR8, UQCR10/QCR9, UQCR11/QCR10 and a cleavage product of UQCRFS1). This cytochrome bc1 complex then forms a dimer. Heme b serves as cofactor.

Its subcellular location is the mitochondrion inner membrane. In terms of biological role, component of the ubiquinol-cytochrome c reductase complex (complex III or cytochrome b-c1 complex) that is part of the mitochondrial respiratory chain. The b-c1 complex mediates electron transfer from ubiquinol to cytochrome c. Contributes to the generation of a proton gradient across the mitochondrial membrane that is then used for ATP synthesis. The polypeptide is Cytochrome b (MT-CYB) (Asthenes dorbignyi (Creamy-breasted canastero)).